Here is a 372-residue protein sequence, read N- to C-terminus: Probable G-protein coupled receptor 45 (372 aa).

Residues 1 to 38 (MACNSTSLEAYTYLLLNTSNASDSGSTQLPAPLRISLA) are Extracellular-facing. N-linked (GlcNAc...) asparagine glycans are attached at residues Asn4, Asn17, and Asn20. A helical membrane pass occupies residues 39–59 (IVMLLMTVVGFLGNTVVCIIV). The Cytoplasmic portion of the chain corresponds to 60-75 (YQRPAMRSAINLLLAT). A helical transmembrane segment spans residues 76 to 96 (LAFSDIMLSLCCMPFTAVTLI). The Extracellular segment spans residues 97 to 109 (TVRWHFGDHFCRL). A helical transmembrane segment spans residues 110–130 (SATLYWFFVLEGVAILLIISV). Residues 131–149 (DRFLIIVQRQDKLNPRRAK) lie on the Cytoplasmic side of the membrane. Residues 150–170 (VIIAVSWVLSFCIAGPSLTGW) traverse the membrane as a helical segment. Topologically, residues 171–198 (TLVEVPARAPQCVLGYTELPADRAYVVT) are extracellular. The helical transmembrane segment at 199 to 219 (LVVAVFFAPFGVMLCAYMCIL) threads the bilayer. At 220 to 268 (NTVRKNAVRVHNQSDSLDLRQLTRAGLRRLQRQQQVSVDLSFKTKAFTT) the chain is on the cytoplasmic side. The helical transmembrane segment at 269–289 (ILILFVGFSLCWLPHSVYSLL) threads the bilayer. The Extracellular portion of the chain corresponds to 290–305 (SVFSQRFYCGSSFYAT). A helical transmembrane segment spans residues 306–326 (STCVLWLSYLKSVFNPIVYCW). Residues 327-372 (RIKKFREACIELLPQTFQILPKVPERIRRRIQPSTVYVCNENQSAV) lie on the Cytoplasmic side of the membrane.

It belongs to the G-protein coupled receptor 1 family. As to expression, expressed in brain; detected in the basal forebrain, frontal cortex, and caudate, but not in thalamus, hippocampus, or putamen.

It is found in the cell membrane. In terms of biological role, orphan receptor. May play a role in brain function. The sequence is that of Probable G-protein coupled receptor 45 (GPR45) from Homo sapiens (Human).